Consider the following 1503-residue polypeptide: Dynein axonemal assembly factor 1 homolog (1503 aa).

6 LRR repeats span residues 34 to 56, 57 to 78, 79 to 100, 101 to 122, 125 to 146, and 150 to 171; these read RLNDVLYLHYQGFQCIENLEEYT, ELKCLWLECNAISEIQGLEKLG, KLKCLFLQNNLITKIENLDPCR, ELDTLNLSSNHIRKIQNIGTNI, VLNTLTIASNYLKDSDSLSDLI, and TLSVLDLSNNRIDDILIVKIFE. Residues 185–223 enclose the LRRCT domain; the sequence is PVVSRLPQYRKTLILACKELTYLDSRPVFPRDRACAEAW. Disordered stretches follow at residues 249–280, 305–328, 956–1033, and 1295–1315; these read SINCTIRMRNSHRPPDQQDPLLRSSDSEDDTC, EQPISDHGTSTSSSVEDKDGTSSQ, DSGD…DHDE, and STNNHSFSTKKTLPTKTSTSE. Residues 973–985 are compositionally biased toward acidic residues; the sequence is TESEDYDTAEDEY. Positions 1014–1031 are enriched in basic and acidic residues; sequence QKQDKPDTVEEVGKKNDH. The segment covering 1303–1314 has biased composition (low complexity); the sequence is TKKTLPTKTSTS.

The protein belongs to the DNAAF1 family.

The protein resides in the cell projection. The protein localises to the cilium. Its function is as follows. Cilium-specific protein required for cilia structures. The polypeptide is Dynein axonemal assembly factor 1 homolog (dtr) (Drosophila erecta (Fruit fly)).